We begin with the raw amino-acid sequence, 446 residues long: Eukaryotic translation initiation factor 3 subunit E (446 aa).

The PCI domain maps to 256–425 (TDLFFSPAYI…GTVIMNHPPQ (170 aa)).

The protein belongs to the eIF-3 subunit E family. In terms of assembly, component of the eukaryotic translation initiation factor 3 (eIF-3) complex.

The protein resides in the cytoplasm. Its function is as follows. Component of the eukaryotic translation initiation factor 3 (eIF-3) complex, which is involved in protein synthesis of a specialized repertoire of mRNAs and, together with other initiation factors, stimulates binding of mRNA and methionyl-tRNAi to the 40S ribosome. The eIF-3 complex specifically targets and initiates translation of a subset of mRNAs involved in cell proliferation. This chain is Eukaryotic translation initiation factor 3 subunit E (int6), found in Aspergillus terreus (strain NIH 2624 / FGSC A1156).